Consider the following 194-residue polypeptide: NADH-quinone oxidoreductase subunit B (194 aa).

The [4Fe-4S] cluster site is built by Cys-73, Cys-74, Cys-138, and Cys-168.

Belongs to the complex I 20 kDa subunit family. NDH-1 is composed of 14 different subunits. Subunits NuoB, C, D, E, F, and G constitute the peripheral sector of the complex. [4Fe-4S] cluster is required as a cofactor.

It is found in the cell inner membrane. The catalysed reaction is a quinone + NADH + 5 H(+)(in) = a quinol + NAD(+) + 4 H(+)(out). In terms of biological role, NDH-1 shuttles electrons from NADH, via FMN and iron-sulfur (Fe-S) centers, to quinones in the respiratory chain. The immediate electron acceptor for the enzyme in this species is believed to be ubiquinone. Couples the redox reaction to proton translocation (for every two electrons transferred, four hydrogen ions are translocated across the cytoplasmic membrane), and thus conserves the redox energy in a proton gradient. In Rhizobium johnstonii (strain DSM 114642 / LMG 32736 / 3841) (Rhizobium leguminosarum bv. viciae), this protein is NADH-quinone oxidoreductase subunit B.